A 24-amino-acid chain; its full sequence is Cupiennin-5a (24 aa).

In terms of tissue distribution, expressed by the venom gland.

The protein localises to the secreted. This is Cupiennin-5a from Cupiennius salei (American wandering spider).